The following is a 433-amino-acid chain: 3-phosphoshikimate 1-carboxyvinyltransferase (433 aa).

3 residues coordinate 3-phosphoshikimate: lysine 15, serine 16, and arginine 20. Residue lysine 15 participates in phosphoenolpyruvate binding. Glycine 96 and arginine 124 together coordinate phosphoenolpyruvate. Residues serine 169, glutamine 171, aspartate 318, and lysine 345 each coordinate 3-phosphoshikimate. Glutamine 171 contacts phosphoenolpyruvate. Aspartate 318 acts as the Proton acceptor in catalysis. Phosphoenolpyruvate-binding residues include arginine 349 and arginine 393.

This sequence belongs to the EPSP synthase family. As to quaternary structure, monomer.

The protein resides in the cytoplasm. It carries out the reaction 3-phosphoshikimate + phosphoenolpyruvate = 5-O-(1-carboxyvinyl)-3-phosphoshikimate + phosphate. It functions in the pathway metabolic intermediate biosynthesis; chorismate biosynthesis; chorismate from D-erythrose 4-phosphate and phosphoenolpyruvate: step 6/7. In terms of biological role, catalyzes the transfer of the enolpyruvyl moiety of phosphoenolpyruvate (PEP) to the 5-hydroxyl of shikimate-3-phosphate (S3P) to produce enolpyruvyl shikimate-3-phosphate and inorganic phosphate. The chain is 3-phosphoshikimate 1-carboxyvinyltransferase from Chlorobium phaeovibrioides (strain DSM 265 / 1930) (Prosthecochloris vibrioformis (strain DSM 265)).